Here is a 239-residue protein sequence, read N- to C-terminus: MGKPKFYDFCVHAVPDGDSTAQEQVSLGRHFGFSGIALANHSDRLPDRKPILPFIEGFEVFRGIELVEENPSKLHSLIGKFRNSMDVLIVHGGSEAVNRAALENPRVDILNHPAFDRSSGLNQVLAKAAAENGVAIGIILRPLLHSRGSRRIRLLSDLKSNLELARKYDVSLVLCSDAMSCFDLRSPMEMLALAEVCGLEEDEALEAISTVPEKIIAKNRPGPGYIKKGIEVLEGEDLF.

This sequence belongs to the eukaryotic/archaeal RNase P protein component 3 family. Consists of a catalytic RNA component and at least 4-5 protein subunits.

The protein localises to the cytoplasm. The enzyme catalyses Endonucleolytic cleavage of RNA, removing 5'-extranucleotides from tRNA precursor.. Functionally, part of ribonuclease P, a protein complex that generates mature tRNA molecules by cleaving their 5'-ends. The protein is Ribonuclease P protein component 3 of Methanosarcina acetivorans (strain ATCC 35395 / DSM 2834 / JCM 12185 / C2A).